Here is a 661-residue protein sequence, read N- to C-terminus: L-type lectin-domain containing receptor kinase V.5 (661 aa).

An N-terminal signal peptide occupies residues 1–25 (MSRELIILCQPILVLFLTLFYNSHG). Residues 26–282 (YFVSQGSVGI…KTSNRTKTVL (257 aa)) are Extracellular-facing. The tract at residues 30–250 (QGSVGIGFNG…GAIHYLMGWL (221 aa)) is legume-lectin like. Asn-45, Asn-64, Asn-116, Asn-198, and Asn-276 each carry an N-linked (GlcNAc...) asparagine glycan. Residues 283–303 (AVCLTVSVFAAFVASWIGFVF) traverse the membrane as a helical segment. Residues 304-661 (YLRHKKVKEV…TDSSFVSHGR (358 aa)) are Cytoplasmic-facing. The region spanning 338-596 (FKEKQLLGKG…LGVLCSHQAA (259 aa)) is the Protein kinase domain. ATP is bound by residues 344-352 (LGKGGFGQV) and Lys-367. Asp-464 serves as the catalytic Proton acceptor.

It in the C-terminal section; belongs to the protein kinase superfamily. Ser/Thr protein kinase family. The protein in the N-terminal section; belongs to the leguminous lectin family. In terms of processing, autophosphorylated on a Ser residue. In terms of tissue distribution, expressed at low levels in stems, leaves, flowers and siliques.

The protein localises to the cell membrane. The enzyme catalyses L-seryl-[protein] + ATP = O-phospho-L-seryl-[protein] + ADP + H(+). The catalysed reaction is L-threonyl-[protein] + ATP = O-phospho-L-threonyl-[protein] + ADP + H(+). Confers resistance to the pathogenic oomycetes Phytophthora infestans and Phytophthora capsici, but confers susceptibility to the pathogenic bacteria Pseudomonas syringae. In Arabidopsis thaliana (Mouse-ear cress), this protein is L-type lectin-domain containing receptor kinase V.5.